An 85-amino-acid polypeptide reads, in one-letter code: Insecticidal toxin Vn1 (85 aa).

The N-terminal stretch at Met-1–Ser-23 is a signal peptide. A disulfide bridge links Cys-71 with Cys-84.

Highly expressed in the venom apparatus, and weakly expressed in residual body.

Its subcellular location is the secreted. Its function is as follows. Endoparasitoid venom toxin that exhibits insecticidal activity against Tenebrio molitor pupae. Impacts genes related to immune response, environmental information processing, metabolism, and response to external stimuli in T.molitor, suggesting its involvement in the intricate parasitoid wasp-host interaction. This Aphidius gifuensis (Parasitoid wasp) protein is Insecticidal toxin Vn1.